The chain runs to 349 residues: 1-acylglycerol-3-phosphate O-acyltransferase ABHD5 (349 aa).

Alanine 2 carries the post-translational modification N-acetylalanine. In terms of domain architecture, AB hydrolase-1 spans 77 to 184; sequence PLVLLHGFGG…LVEPWGFPER (108 aa). At serine 122 the chain carries Phosphoserine. The HXXXXD motif motif lies at 327-332; sequence HYVYAD.

Belongs to the peptidase S33 family. ABHD4/ABHD5 subfamily. As to quaternary structure, interacts with ADRP, PLIN and PNPLA2. Interacts with PLIN5; promotes interaction with PNPLA2.

The protein resides in the cytoplasm. It localises to the lipid droplet. The enzyme catalyses a 1-acyl-sn-glycero-3-phosphate + an acyl-CoA = a 1,2-diacyl-sn-glycero-3-phosphate + CoA. It catalyses the reaction 1-(9Z-octadecenoyl)-sn-glycero-3-phosphate + (9Z)-octadecenoyl-CoA = 1,2-di-(9Z-octadecenoyl)-sn-glycero-3-phosphate + CoA. It carries out the reaction 1-(9Z-octadecenoyl)-sn-glycero-3-phosphate + hexadecanoyl-CoA = 1-(9Z)-octadecenoyl-2-hexadecanoyl-sn-glycero-3-phosphate + CoA. The catalysed reaction is 1-(9Z-octadecenoyl)-sn-glycero-3-phosphate + octadecanoyl-CoA = 1-(9Z-octadecenoyl)-2-octadecanoyl-sn-glycero-3-phosphate + CoA. The enzyme catalyses 1-(9Z-octadecenoyl)-sn-glycero-3-phosphate + (5Z,8Z,11Z,14Z)-eicosatetraenoyl-CoA = 1-(9Z)-octadecenoyl-2-(5Z,8Z,11Z,14Z)-eicosatetraenoyl-sn-glycero-3-phosphate + CoA. It catalyses the reaction eicosanoyl-CoA + 1-(9Z-octadecenoyl)-sn-glycero-3-phosphate = 1-(9Z)-octadecenoyl-2-eicosanoyl-sn-glycero-3-phosphate + CoA. It carries out the reaction 1-hexadecanoyl-sn-glycero-3-phosphate + (9Z)-octadecenoyl-CoA = 1-hexadecanoyl-2-(9Z-octadecenoyl)-sn-glycero-3-phosphate + CoA. The catalysed reaction is 1-octadecanoyl-sn-glycero-3-phosphate + (9Z)-octadecenoyl-CoA = 1-octadecanoyl-2-(9Z-octadecenoyl)-sn-glycero-3-phosphate + CoA. The enzyme catalyses 1-(5Z,8Z,11Z,14Z-eicosatetraenoyl)-sn-glycero-3-phosphate + (9Z)-octadecenoyl-CoA = 1-(5Z,8Z,11Z,14Z)-eicosatetraenoyl-2-(9Z)-octadecenoyl-sn-glycero-3-phosphate + CoA. With respect to regulation, acyltransferase activity is inhibited by detergents such as Triton X-100 and 3-[(3-cholamidopropyl)dimethylammonio]-1-propanesulfonate (CHAPS). Acyltransferase activity is inhibited by the presence of magnesium and calcium. Its function is as follows. Coenzyme A-dependent lysophosphatidic acid acyltransferase that catalyzes the transfer of an acyl group on a lysophosphatidic acid. Functions preferentially with 1-oleoyl-lysophosphatidic acid followed by 1-palmitoyl-lysophosphatidic acid, 1-stearoyl-lysophosphatidic acid and 1-arachidonoyl-lysophosphatidic acid as lipid acceptor. Functions preferentially with arachidonoyl-CoA followed by oleoyl-CoA as acyl group donors. Functions in phosphatidic acid biosynthesis. May regulate the cellular storage of triacylglycerol through activation of the phospholipase PNPLA2. Involved in keratinocyte differentiation. Regulates lipid droplet fusion. This is 1-acylglycerol-3-phosphate O-acyltransferase ABHD5 from Pongo abelii (Sumatran orangutan).